Consider the following 136-residue polypeptide: Large ribosomal subunit protein uL16 (136 aa).

It belongs to the universal ribosomal protein uL16 family. Part of the 50S ribosomal subunit.

Binds 23S rRNA and is also seen to make contacts with the A and possibly P site tRNAs. The polypeptide is Large ribosomal subunit protein uL16 (Bradyrhizobium diazoefficiens (strain JCM 10833 / BCRC 13528 / IAM 13628 / NBRC 14792 / USDA 110)).